The primary structure comprises 57 residues: UPF0391 membrane protein Nham_2738 (57 aa).

2 helical membrane-spanning segments follow: residues 4–24 and 30–50; these read WVVT…GGLA and IAKI…VVGL.

The protein belongs to the UPF0391 family.

It localises to the cell membrane. This chain is UPF0391 membrane protein Nham_2738, found in Nitrobacter hamburgensis (strain DSM 10229 / NCIMB 13809 / X14).